Here is a 5005-residue protein sequence, read N- to C-terminus: MDQRKNDSIVPSITQLEDFLTEHNSNVVWLLVATILSCGWIIYLTYYNSRNVGLILTLVLNRLYKHGYIHIGSFSFSVLSGKVMVREIYYITEDMSIRIQDGFIIFRWWKMYNPKQKQHDPKAETRLYITVNDFEFHVYNRSDLYGRLQELFGLEPTIIPPKKDDDKTRENGRTRTQSKIERVKVKTESQDPTSSWRSLIPVIKVNVSTGRLAFGNHYQPQTLCINFDDAFLTYTTKPPSSHLDQFMHIVKGKLENVRVMLVPSPRYVGLQNDEPPRLMGEGFVVLQSNDVDLYYYMDEPGLVPEETEESTEGDISSEDCKLQDLPPCWGLDIVCGKGTDFNYGPWADRQRDCLWKFFFPPDYQVLKVSEIAQPGRPRQILAFELRMNIITDATIDLLFTKNRETNAVHVNVGAGSYLEINIPMTVDENGYTPAIKGQLLHVDATTSMQYRTLLEAEMLAFHINASYPRIWNMPQTWQCELEVYKATYHFIFAQKNFFTDLIQDWSSDNAPDIFSFVPYTWNFKIMFHQFEMIWAANQHNWIDCSTKQQENVYLAACGETLNIDFSLPFTDFVPATCNTRFSLRGEDVDLHLFLPDCHPSKYSLFMLVKNCHPNKMVPETGIPAECQSGQKTVKPKWRNVTQEKAGWVECWTVPSVMLTIDYTWHPIYPQKADEQLKQSLSEMEETMLSVLRPAQKTSERVVSSPSMSPRPPVDPSELPPDKLHVEMELSPDSQITLYGPLLNAFLCIKENYFGEDDMYMDFEEVISSPVLSLSTSSSSGWTAVGMDNDKRENESSAKSIHPLALRPWDITVLVNLYKVHGRLPVHGTTDGPECPTAFLERLCFEMKKGFRETMLQLVLSPLNVFVSDNYQQRPPVDEVLREGHINLSGLQLRAHAMFSAEGLPLGSDSLEYAWLIDVQAGSLTAKVTAPQLACLLEWGQTFVFHVVCREYELERPKSVIVCQHGIDRRFCESKLSCIPGPCPTSDDLKYTMTRLAIDGSDIYIVEHGCATNIKMGAVRIANCNLHNQSVGEGISAAIQDFQVRQYIEQLNNCRIGLQPAVLRRAYWLEAGSANLGLITVDIALAADHHSKHEAQRHFLETHDARTKRLWFLWPDDTLKNKRCRNKCGCLGGCRFFGGTVTGLDFFKLEELTPSSSSAFSSTSAESDMYYGQSLLQPGEWIITKEIPKTVDGNVNSMKRKEWENKSVGIEGERKTQHLSLQVPLRSHSSSSSSEENSSSSAAQPLLAGEKESPSSAADDHSVQKDLLHSARRDDGQASVPTEISGTSPVSPNTQDKSVGQSPLRSPLKRQASVCSTRLGSTKSLTAAFYGDKQPVTVGVQFSSDVSRSDENVLDSPKQRRSFGSFPYTPSADSNSFHQYRSMDSSMSMADSEAYFSAAEEFEPISSDEGPGTYPGRKKKKKQMQQIDYSRGSIYHSVEGPLAVHGEGITDPRTLPFKTHPSQASFVSALGGEDEVIEHVYIVEGEKRGESEQVTSQQPVMSCYHTYLTQFQVINWSVKHPTNKRTSKSSLHRPLDLDTPTSEESSSSFEQLCVPTFKVIKQGLTANSLLDRGMQLSGSTSNTPYTPLDKKIVDTTDDETLTEEWTLDQPVAQTKTTAIVEVKGTVDVVLTPLVAEALDRYIEAMVHRVSTRHPAAIVDDLHTKVLREAVQNSKTTFSENLSPKQDIRGTKTEHPMIGTTNQGQIQTNVTTKQDNVTIKGLQANVSIPKVNLCLLQASVEESPATVPSRSVTHVSLVALCFDRIATQVRMNRGVVEETANNVDAGKTSNFDRYVHASKMQPQSSGSLRSNAGAEKGKEIAAKLNIHRVHGQLRGLDTTDIGTCAITAIPFEKSKVLFTLEELDEFTFVDETDQQAIPDVTRIGPSQEKWGWIMFECGLENLTIKGGRQSGAVLYNSFGIMGKNSVTERGGVLTSNNSSDSPTGSGYNTDVSDDNLPCDRTSPSSDINGNSVSDEQDEGVESDDLKKDLPLMPPPPDSCSMKLTIKEIWFSFAAPTNVRSPAHAFSRQLNLLSTATPAVGAWLVPIDQLKSSLNKLETEGTLRICAVMGCIMTEALENKSVHFPLRSKYNRLTKVARFLQENPSCLLCNILHHYLHQANYSIIDDATMSDGLPALVTLKKGLVALARQWMKFIVVTPAFKGVSLHRPAQPLKPPATVDQEHEEGLGLDNGGGLQSDTSADGAEFEFDAATVSEHTMLLEGTANRPPPGSSGPVTGAEIMRKLSKTHTHSDSALKIKGIHPYHSLSYTSGDTATDSPVHVGRAGMPVKESPRKESLLSYLTGSFPSLHNLLEGTPQRSSAAVKSSSLTRTGNTVATDMLSEHPLLSEPSSVSFYNWMSNAVGNRGSVVQESPVTKSGHNSLPTGVAPNLPTIPSASDFNTVLSSDQNTLDGTHSQHSTSQDDVAGVEEANQGFPAVQLADAQVVFKPLLSHTGIQSQDTMPLCYRMYFGEHLSFSGTLDCLRADIVDSDTAKDRKGKRARRQGHVNLPPLEFKPALMLETFSISAVVMEKSVCTPQNSTSALSFHDLNKRYYNTFHCNFTISCQSISQHVDMALVRLIHQFSTMIDDIKATQTDIKLSRYTAGSASPTPTFKTRKHRDFRSSDFSRSSRGSLNGGNRVNNAKNKRANNENNKKESRNKNSLGRSERRTSKVSRKGSKDVVDHMTIHMDDSDSITVSEQSEPSAECWQNMYKLLNFYSLISDPTGILEKSSETFGPAGVRSPTEPTCRVVFENEQDNNSLTKTQRKRSLVTSEPQHVTLIVFGIGMVNRTHLEADIGGLTMESELKRIHGSFTLKEKMKDVLHQKMTETCATAHIGGVNIVLLEGITPNIQLEDFPTSPTSTAKQEFLTVVKCSIAKSQALYSAQRGLKTNNAAVFKVGAISINIPQHPATLHSMMVRSSHQLSKQISDLIRQPSTAPQPMKEDIATPLPSEKTPTSVNQTPIETNEFPQLPEGLEKKPIVLKFSAMLDGIAIGAALLPSLKAEYKMGRMRSHGMTGAQTRFTFELPNHRLRFTSKVSATDMSTIPPSASLNLPPVTMSGKYIMEEHDSYSDQVWSIDELPSKQGYYLQGNYLRCVAEVGSFEHNLTTDLLNHLVFVQKVFMKEVNEVIQKVSGGEQPIPLWNEHDGTTDGDKPKILLYSLNLQFKGIQVTATTPSMRAVRFETGLIELELSNRLQTKASPGSSSYLKLFGKCQVDLNLALGQIVKHQVYEEAGSDFHQVAYFKTRIGLRNALREEISGSSDREAVLITLNRPIVYAQPVAFDRAVLFWLNYKAAYDNWNEQRMALHKDIHMATKEVVDMLPGIQQTSAQAFGTLFLQLTVNDLGICLPITNTAQSNHTGDLDTGSALVLTIESTLITACSSESLVSKGHFKNFCIRFADGFETSWDDWKPEIRGDLVMNACVVPDGTYEVCSRTTGQAAAESSSAGTWTLNVLWKMCGIDVHMDPNIGKRLNALGNTLTTLTGEEDIDDIADLNSVNIADLSDEDEVDTMSPTIHTEAVDYRRQGTSSSQPGELRGRKIMKRLVDIRELNEQAKVIDDLKKLGASEGTINQEIQRYQQLESVAVNDIRRDVRKKLRRSSMRAASLKDKWGLGYKPSYSRSKSISASGRPPLKRMERASSRIGETDELPEIRVDAASPGPRVTFNIQDTFPEETELDLLSVTIEGPSHYSSNSEGSCSVFSSPKTTGGFSPSVPFQSEDGRRDDSLSSTSEDSEKDEKDEDRERERFYIYRKPSHTSRKKATGFAAVHQLLTERWPTTPVNRSLSGTATERNIDFELDIRVEIDSGKCVLHPTTLLQEHDDISLRRSYDRSSRSLDQDSPSKKKKFQTNYASTTHLMTGKKVPSSLQTKPSDLETTVFYIPGVDVKLHYNSKTLKTESPNASRGSSLPRTLSKESKLYGMKDSAASPSPSPLPCTVQSKTNTLLPPQPPPIPSAKGKGSGGVKTAKLYAWVALQSLPEEMVISPCLLDFLEKALETIPITPIERNYTAVSSQDEDMGHFDIPDPMEESTTSLVSSSTSAYSSFPVDVVVYVRVQPSQIKFSCLPVSRVECMLKLPSLDLVFSSNRGELETLGTTYPAETVSPGSNAPQTGAKTSASKAGMPGSSGLGSPLGRSRHSSSQSDLTGSSSSSSGLSFTACMSDFSLYVFHPYGAGKQKSTVSGLTSGSGGLGNVDEEPTSVTGRKDSLSINLEFVKVSLSRIRRSGGASFFESQSVSKSTSKMDTTLINISAVCDIGSASFKYDMRRLSEILAFPRAWYRRSIARRLFLGDQTVNLPTSGPGTPDSIEGVSQHLSPESSRKAYCRTWDQPSQSASFTHMPQSPNVFNEHMTNNTMSPGTAAQSLKSPASIRSRSVSDSSVPRRDSISKTSTPVNKSNKAASQQGTPWETLVVFAINLKQLNVQMNMSNVMGNTTWTTSGLKSQGRLSVGSNRDREISMSVGLGRSQLDSKGGVVGGTIDVNALEMVAHISEHPNQQPNHKIQITMGSTESRVDYMGSSILMGIFSNADLKLQDEWKVNLYNALDSSMTDKSEIFVHGDLKWDIFQVMISRSTTPDLIKIGMKLQEFFTQQFDTSKRALSTWGPVPYLPPKTMTNNLEKNSQEQLLDAAHHRHWPGVLKVVSGCHISLFQVPLPEDGMQFGGSMSLHGNHMTLACFHGPNFRSKSWALFHLEEPNIAFWTEAQKIWEDGSSDHSTYIVQTLDFHLGHNTMVTKPCGALESPMATITKITRRRHENPPHGVASVKEWFNYVTATRNEELNLLRNVDANNTENSTTVKNSSLLSGFRGGSSYNHETETIFALPRMQLEFKSIHVQEPQEPSLQDASLKPKVECSVVTEFTDHICVTMDAELIMFLHDLVSAYLKEKEKAIFPPRILSTRPGQKCPLIIHDDSSSDRDREDSITYTTVDWRDFMCNTWHLEPTLRLISWTGRKIDPVGVDYILQKLGFHHARTTIPKWLQRGVMDPLDKVLSVLIKKLGTALQDEKEKKGKDKEEH.

A helical transmembrane segment spans residues 27 to 47 (VVWLLVATILSCGWIIYLTYY). Disordered stretches follow at residues 692-718 (RPAQ…PSEL) and 1205-1314 (KSVG…ASVC). Pro residues predominate over residues 708-718 (SPRPPVDPSEL). The segment covering 1205–1215 (KSVGIEGERKT) has biased composition (basic and acidic residues). A compositionally biased stretch (low complexity) spans 1226–1240 (SHSSSSSSEENSSSS). The segment covering 1248–1275 (GEKESPSSAADDHSVQKDLLHSARRDDG) has biased composition (basic and acidic residues). Over residues 1278 to 1303 (SVPTEISGTSPVSPNTQDKSVGQSPL) the composition is skewed to polar residues. Phosphoserine is present on residues serine 1301, serine 1305, and serine 1323. A Phosphothreonine modification is found at threonine 1325. 4 disordered regions span residues 1343-1376 (SDVS…SNSF), 1399-1425 (EEFE…QMQQ), 1521-1544 (TNKR…SEES), and 1676-1698 (FSEN…MIGT). A phosphoserine mark is found at serine 1355 and serine 1406. The segment covering 1521–1530 (TNKRTSKSSL) has biased composition (basic residues). Residues 1684–1693 (QDIRGTKTEH) are compositionally biased toward basic and acidic residues. A phosphoserine mark is found at serine 1805 and serine 1808. Disordered regions lie at residues 1927–1991 (RGGV…PLMP), 2165–2192 (PAQP…GGLQ), 2265–2288 (TSGD…KESP), 2367–2387 (ESPV…PNLP), 2400–2420 (SSDQ…QDDV), and 2598–2677 (TAGS…KDVV). Polar residues-rich tracts occupy residues 1931–1948 (LTSN…YNTD) and 1959–1971 (TSPS…NSVS). Composition is skewed to polar residues over residues 2367 to 2379 (ESPV…NSLP), 2400 to 2418 (SSDQ…TSQD), and 2598 to 2608 (TAGSASPTPTF). Phosphoserine occurs at positions 2601 and 2603. Residues 2619–2638 (SDFSRSSRGSLNGGNRVNNA) show a composition bias toward low complexity. Positions 2643–2665 (ANNENNKKESRNKNSLGRSERRT) are enriched in basic and acidic residues. Serine 2755 carries the post-translational modification Phosphoserine. The tract at residues 2928–2967 (RQPSTAPQPMKEDIATPLPSEKTPTSVNQTPIETNEFPQL) is disordered. Over residues 2949 to 2964 (KTPTSVNQTPIETNEF) the composition is skewed to polar residues. Phosphoserine is present on residues serine 3562, glutamate 3577, and serine 3653. Disordered stretches follow at residues 3614-3662 (YSRS…TFNI), 3686-3744 (SSNS…ERFY), 3821-3843 (RRSY…KKFQ), 3935-3954 (KTNT…KGKG), 4089-4145 (TTYP…SSSS), and 4325-4396 (QSAS…ASQQ). Polar residues predominate over residues 3686-3711 (SSNSEGSCSVFSSPKTTGGFSPSVPF). Positions 3727 to 3736 (EDSEKDEKDE) are enriched in acidic residues. Positions 3821 to 3837 (RRSYDRSSRSLDQDSPS) are enriched in basic and acidic residues. Positions 4097-4112 (SPGSNAPQTGAKTSAS) are enriched in polar residues. Residues 4117–4145 (PGSSGLGSPLGRSRHSSSQSDLTGSSSSS) show a composition bias toward low complexity. Serine 4124 carries the post-translational modification Phosphoserine. The span at 4325-4358 (QSASFTHMPQSPNVFNEHMTNNTMSPGTAAQSLK) shows a compositional bias: polar residues. Over residues 4359 to 4372 (SPASIRSRSVSDSS) the composition is skewed to low complexity. Polar residues predominate over residues 4381 to 4396 (KTSTPVNKSNKAASQQ).

Highly expressed in testis and ovary. Weakly or not expressed in other tissues.

It localises to the cell membrane. It is found in the endoplasmic reticulum membrane. Its subcellular location is the mitochondrion membrane. Functionally, tube-forming lipid transport protein which provides phosphatidylethanolamine for glycosylphosphatidylinositol (GPI) anchor synthesis in the endoplasmic reticulum. Plays a role in endosomal trafficking and endosome recycling. Also involved in the actin cytoskeleton and cilia structural dynamics. Acts as a regulator of phagocytosis. The chain is Bridge-like lipid transfer protein family member 1 (Bltp1) from Mus musculus (Mouse).